The chain runs to 618 residues: Cytosolic Fe-S cluster assembly factor NAR1 (618 aa).

The [4Fe-4S] cluster site is built by Cys20, Cys61, Cys64, Cys67, Cys212, Cys267, Cys471, and Cys475. Disordered stretches follow at residues 495-516 (TSSI…TPQE) and 530-560 (SADS…PESR).

It belongs to the NARF family.

Its function is as follows. Component of the cytosolic Fe/S protein assembly machinery. Required for maturation of extramitochondrial Fe/S proteins. May play a role in the transfer of pre-assembled Fe/S clusters to target apoproteins. This chain is Cytosolic Fe-S cluster assembly factor NAR1 (NAR1), found in Coccidioides immitis (strain RS) (Valley fever fungus).